A 227-amino-acid polypeptide reads, in one-letter code: ATP-dependent dethiobiotin synthetase BioD (227 aa).

13–18 (DAGKTT) serves as a coordination point for ATP. T17 lines the Mg(2+) pocket. K38 is a catalytic residue. ATP-binding positions include D55, 118–121 (EGAG), 178–179 (NR), 207–209 (PYI), and E214. Positions 55 and 118 each coordinate Mg(2+).

It belongs to the dethiobiotin synthetase family. In terms of assembly, homodimer. Requires Mg(2+) as cofactor.

It localises to the cytoplasm. It catalyses the reaction (7R,8S)-7,8-diammoniononanoate + CO2 + ATP = (4R,5S)-dethiobiotin + ADP + phosphate + 3 H(+). It participates in cofactor biosynthesis; biotin biosynthesis; biotin from 7,8-diaminononanoate: step 1/2. Functionally, catalyzes a mechanistically unusual reaction, the ATP-dependent insertion of CO2 between the N7 and N8 nitrogen atoms of 7,8-diaminopelargonic acid (DAPA, also called 7,8-diammoniononanoate) to form a ureido ring. The chain is ATP-dependent dethiobiotin synthetase BioD from Tolumonas auensis (strain DSM 9187 / NBRC 110442 / TA 4).